Consider the following 385-residue polypeptide: MDIRRDFHMAEGEGEWSYSKNCRRQQVAVRETRPMVETAVKQVYAALLPRTMVVADLGCSAGPNTLLFISSVLSSIAAAAAEQCKPPSGGGDDDDHHVELQFVLNDLPGNDFNHLFRSVEEEFRRAAGCERAPHPPYYVMGLPESYYNRLFPRQSVHLFHSSYCLQWRSQEPEGLEAWRKPCLNEDNIYIARTTTPSVAKLFQEQFQKDFSLFLKLRHEELVHGGRMVLIFLGRKNEDVYSGDLNQLFALVATALQSLVLKGLVEKEKLESFNLPVYGPSVGEVEELVTRSGLQFSMDLIKQFEMNWDPFDDSEGDNDVVVVEDSARSSVNVAKLIRSVLKALVVRHFGEAVLDACFAEFRRLVAEHLGKEKTKFTTIAMCLKKE.

An S-adenosyl-L-homocysteine-binding site is contributed by Y18. Residue Q25 participates in benzoate binding. Residues C59, N64, D106, L107, S145, and Y146 each contribute to the S-adenosyl-L-homocysteine site. Position 167 (W167) interacts with benzoate. Mg(2+) is bound by residues N184, E270, F272, and N273.

Belongs to the methyltransferase superfamily. Type-7 methyltransferase family. SABATH subfamily. The cofactor is Mg(2+).

The catalysed reaction is benzoate + S-adenosyl-L-methionine = methyl benzoate + S-adenosyl-L-homocysteine. Its function is as follows. Methyltransferase involved in the biosynthesis of methyl benzoate in response to stresses. Utilizes exclusively benzoic acid (BA) as substrate. This Zea mays (Maize) protein is Benzoate O-methyltransferase (OMT8).